A 322-amino-acid polypeptide reads, in one-letter code: Peroxidase 66 (322 aa).

The signal sequence occupies residues 1–24; it reads MAFSKGLIFAMIFAVLAIVKPSEA. 2 disulfides stabilise this stretch: cysteine 35–cysteine 114 and cysteine 68–cysteine 73. Histidine 66 acts as the Proton acceptor in catalysis. Aspartate 67, glycine 72, aspartate 74, and serine 76 together coordinate Ca(2+). An N-linked (GlcNAc...) asparagine glycan is attached at asparagine 155. Proline 161 is a substrate binding site. Asparagine 166 is a glycosylation site (N-linked (GlcNAc...) asparagine). Position 191 (histidine 191) interacts with heme b. Threonine 192 contributes to the Ca(2+) binding site. Cysteines 198 and 230 form a disulfide. An N-linked (GlcNAc...) asparagine glycan is attached at asparagine 207. The Ca(2+) site is built by aspartate 245, threonine 247, and aspartate 252.

It belongs to the peroxidase family. Classical plant (class III) peroxidase subfamily. The cofactor is heme b. Requires Ca(2+) as cofactor.

The protein resides in the secreted. The catalysed reaction is 2 a phenolic donor + H2O2 = 2 a phenolic radical donor + 2 H2O. Removal of H(2)O(2), oxidation of toxic reductants, biosynthesis and degradation of lignin, suberization, auxin catabolism, response to environmental stresses such as wounding, pathogen attack and oxidative stress. These functions might be dependent on each isozyme/isoform in each plant tissue. The chain is Peroxidase 66 (PER66) from Arabidopsis thaliana (Mouse-ear cress).